A 410-amino-acid polypeptide reads, in one-letter code: Exopolygalacturonase (410 aa).

A signal peptide spans 1 to 22; that stretch reads MACTNNAMRALFLLVLFCIVHG. N-linked (GlcNAc...) asparagine glycosylation is present at Asn89. PbH1 repeat units lie at residues 192–218, 219–240, 242–262, 272–293, and 337–377; these read CKDM…HMGD, SSGI…SIGP, TSKV…SIGS, VTDI…RIKA, and ASKV…TMDD. The Proton donor role is filled by Asp233. A disulfide bond links Cys235 and Cys252. Asn246 is a glycosylation site (N-linked (GlcNAc...) asparagine). The active site involves His256. Asn349 carries an N-linked (GlcNAc...) asparagine glycan. Residues Cys364 and Cys370 are joined by a disulfide bond. Asn387 carries an N-linked (GlcNAc...) asparagine glycan. Cys393 and Cys409 are joined by a disulfide.

Belongs to the glycosyl hydrolase 28 family. Pollen.

It localises to the secreted. Its subcellular location is the cell wall. The enzyme catalyses [(1-&gt;4)-alpha-D-galacturonosyl](n) + H2O = alpha-D-galacturonate + [(1-&gt;4)-alpha-D-galacturonosyl](n-1). Its function is as follows. May function in depolymerizing pectin during pollen development, germination, and tube growth. Acts as an exo-polygalacturonase. In Zea mays (Maize), this protein is Exopolygalacturonase (PG1).